The chain runs to 422 residues: MDKLRITGGAQLRGEVTISGAKNSALPILCAGLLTADPLVLANVPDLNDTSTMLRLLGRMGVRAERGADGIVTVQASQVDNLEAPYDLVKTMRASILVLGPLLARFGQARVSLPGGCTIGQRPVDQHIKGMAALGADIRIEHGFVVAQAARLKGASIRTDMVTVTGTENLLMAAVLAEGQTVLENAAREPEIVDLAELLIKMGARIQGHGTDRIVIDGVASLHGAEHSVIPDRIEAGTFLCAVGAAGGDITLRNAAPDTLGATLDKLIEAGLTIETGPDWIRGAMQGRPRAVGARTHEYPGFATDMQAQLMALDTVAQGTAVIVENIFENRYMHVQELRRMGADIDIDGHTAVVRGVPRLSGAAVMATDLRASASLVIAGLAAEGQTQVDRIYHLDRGYDRMEVKLRALGANIQRLTGKEPA.

A phosphoenolpyruvate-binding site is contributed by 22–23 (KN). Arg93 lines the UDP-N-acetyl-alpha-D-glucosamine pocket. Residue Cys117 is the Proton donor of the active site. Cys117 bears the 2-(S-cysteinyl)pyruvic acid O-phosphothioketal mark. UDP-N-acetyl-alpha-D-glucosamine contacts are provided by residues 122 to 126 (RPVDQ), Asp305, and Ile327.

Belongs to the EPSP synthase family. MurA subfamily.

It is found in the cytoplasm. It carries out the reaction phosphoenolpyruvate + UDP-N-acetyl-alpha-D-glucosamine = UDP-N-acetyl-3-O-(1-carboxyvinyl)-alpha-D-glucosamine + phosphate. The protein operates within cell wall biogenesis; peptidoglycan biosynthesis. Functionally, cell wall formation. Adds enolpyruvyl to UDP-N-acetylglucosamine. The sequence is that of UDP-N-acetylglucosamine 1-carboxyvinyltransferase from Bordetella petrii (strain ATCC BAA-461 / DSM 12804 / CCUG 43448).